The chain runs to 308 residues: Aspartate carbamoyltransferase catalytic subunit (308 aa).

Carbamoyl phosphate is bound by residues Arg-49 and Thr-50. L-aspartate is bound at residue Lys-77. The carbamoyl phosphate site is built by Arg-99, His-127, and Gln-130. L-aspartate contacts are provided by Arg-160 and Arg-211. Carbamoyl phosphate-binding residues include Ala-252 and Pro-253.

Belongs to the aspartate/ornithine carbamoyltransferase superfamily. ATCase family. As to quaternary structure, heterododecamer (2C3:3R2) of six catalytic PyrB chains organized as two trimers (C3), and six regulatory PyrI chains organized as three dimers (R2).

The catalysed reaction is carbamoyl phosphate + L-aspartate = N-carbamoyl-L-aspartate + phosphate + H(+). It participates in pyrimidine metabolism; UMP biosynthesis via de novo pathway; (S)-dihydroorotate from bicarbonate: step 2/3. In terms of biological role, catalyzes the condensation of carbamoyl phosphate and aspartate to form carbamoyl aspartate and inorganic phosphate, the committed step in the de novo pyrimidine nucleotide biosynthesis pathway. The protein is Aspartate carbamoyltransferase catalytic subunit of Bacillus caldolyticus.